Here is a 250-residue protein sequence, read N- to C-terminus: Anti-sigma-L factor RslA (250 aa).

Topologically, residues 1–115 (MTMPLRGLGP…VHRRRRRTRL (115 aa)) are cytoplasmic. A helical membrane pass occupies residues 116 to 136 (ITWVASSAAAAVLAIGVLVGV). The Extracellular portion of the chain corresponds to 137-250 (QGHSAAPQRA…TGQVLLQRSL (114 aa)).

In terms of assembly, interacts with ECF RNA polymerase sigma factor SigL; this should inhibit the interaction of SigL with the RNA polymerase catalytic core. In terms of processing, probably cleaved within the membrane by Rip1 near the cytoplasmic membrane interface.

It localises to the cell membrane. Functionally, an anti-sigma factor for extracytoplasmic function (ECF) sigma factor SigL. ECF sigma factors are held in an inactive form by an anti-sigma factor until released by regulated intramembrane proteolysis (RIP). RIP occurs when an extracytoplasmic signal triggers a concerted proteolytic cascade to transmit information and elicit cellular responses. The membrane-spanning regulatory substrate protein is first cut extracytoplasmically (site-1 protease, S1P), then within the membrane itself (site-2 protease, S2P, Rip1), while cytoplasmic proteases finish degrading the regulatory protein, liberating the sigma factor. This chain is Anti-sigma-L factor RslA (rslA), found in Mycobacterium tuberculosis (strain ATCC 35801 / TMC 107 / Erdman).